A 229-amino-acid chain; its full sequence is Heptaprenylglyceryl phosphate synthase (229 aa).

Residue Lys-12 participates in sn-glycerol 1-phosphate binding. Positions 14 and 40 each coordinate Mg(2+). Sn-glycerol 1-phosphate contacts are provided by residues 159–164 (YLEYSG), Gly-189, and 209–210 (GN).

The protein belongs to the GGGP/HepGP synthase family. Group I subfamily. Homodimer. Mg(2+) serves as cofactor.

The catalysed reaction is sn-glycerol 1-phosphate + all-trans-heptaprenyl diphosphate = 3-heptaprenyl-sn-glycero-1-phosphate + diphosphate. It participates in membrane lipid metabolism; glycerophospholipid metabolism. Prenyltransferase that catalyzes in vivo the transfer of the heptaprenyl moiety of heptaprenyl pyrophosphate (HepPP; 35 carbon atoms) to the C3 hydroxyl of sn-glycerol-1-phosphate (G1P), producing heptaprenylglyceryl phosphate (HepGP). This reaction is an ether-bond-formation step in the biosynthesis of archaea-type G1P-based membrane lipids found in Bacillales. The polypeptide is Heptaprenylglyceryl phosphate synthase (Bacillus cereus (strain AH187)).